Consider the following 182-residue polypeptide: Gamma-crystallin N (182 aa).

Beta/gamma crystallin 'Greek key' domains follow at residues 6–46 (GKIT…HVES), 47–89 (GAWV…RPVG), and 95–136 (FRLE…KVYG). The interval 153 to 182 (LSSSLQSDQGPEEATTKPATTQPPFLTANL) is disordered. Residues 169–182 (KPATTQPPFLTANL) are compositionally biased toward polar residues.

Belongs to the beta/gamma-crystallin family. In terms of assembly, monomer. Not specifically expressed in eye.

The protein is Gamma-crystallin N of Homo sapiens (Human).